A 189-amino-acid chain; its full sequence is MAQKERSDHNDSDERRNESGGEFIDKLVHINRVAKVVKGGRRFGFAALVVVGDQKGRVGFGHGKAREVPEAIRKATESAKREMIYVPLRSGRTLHHDVEGRHGAGRVLLRSASAGTGIIAGGSMRAIFETLGMQDVVAKSLGSSNPYNMVRATFDALKRQMHPRDIAAQRGIKYSTLQARRQYIVGMEE.

The region spanning 23–86 (FIDKLVHINR…ESAKREMIYV (64 aa)) is the S5 DRBM domain.

The protein belongs to the universal ribosomal protein uS5 family. As to quaternary structure, part of the 30S ribosomal subunit. Contacts proteins S4 and S8.

Functionally, with S4 and S12 plays an important role in translational accuracy. Located at the back of the 30S subunit body where it stabilizes the conformation of the head with respect to the body. This chain is Small ribosomal subunit protein uS5, found in Bartonella bacilliformis (strain ATCC 35685 / KC583 / Herrer 020/F12,63).